Reading from the N-terminus, the 432-residue chain is D-amino acid dehydrogenase (432 aa).

3–17 (VVVLGSGVVGVTSAW) serves as a coordination point for FAD.

The protein belongs to the DadA oxidoreductase family. Requires FAD as cofactor.

It catalyses the reaction a D-alpha-amino acid + A + H2O = a 2-oxocarboxylate + AH2 + NH4(+). It participates in amino-acid degradation; D-alanine degradation; NH(3) and pyruvate from D-alanine: step 1/1. Its function is as follows. Oxidative deamination of D-amino acids. The protein is D-amino acid dehydrogenase of Enterobacter sp. (strain 638).